The chain runs to 477 residues: Bifunctional enzyme PyrF/PyrE (477 aa).

An OMP decarboxylase region spans residues 1–273; it reads MIFFDKLHQN…ITVRDVASCS (273 aa). The active-site Proton donor is the lysine 96. The orotate phosphoribosyltransferase stretch occupies residues 274–477; that stretch reads VWLPDVFTVK…DEQFLALTAE (204 aa). 5-phospho-alpha-D-ribose 1-diphosphate contacts are provided by residues arginine 374, lysine 375, lysine 378, histidine 380, and 400–408; that span reads DDILISGKS.

It in the N-terminal section; belongs to the OMP decarboxylase family. Type 2 subfamily. The protein in the C-terminal section; belongs to the purine/pyrimidine phosphoribosyltransferase family. Mg(2+) serves as cofactor.

The catalysed reaction is orotidine 5'-phosphate + H(+) = UMP + CO2. It catalyses the reaction orotidine 5'-phosphate + diphosphate = orotate + 5-phospho-alpha-D-ribose 1-diphosphate. It functions in the pathway pyrimidine metabolism; UMP biosynthesis via de novo pathway; UMP from orotate: step 1/2. It participates in pyrimidine metabolism; UMP biosynthesis via de novo pathway; UMP from orotate: step 2/2. Functionally, catalyzes the transfer of a ribosyl phosphate group from 5-phosphoribose 1-diphosphate to orotate, leading to the formation of orotidine monophosphate (OMP). Its function is as follows. Catalyzes the decarboxylation of orotidine monophosphate (OMP) to uridine monophosphate (UMP). The chain is Bifunctional enzyme PyrF/PyrE (pyrFE) from Nostoc sp. (strain PCC 7120 / SAG 25.82 / UTEX 2576).